We begin with the raw amino-acid sequence, 152 residues long: MKKRLFVLSLILLVALDQLSKFWIVSHIALGEVKPFIPGIVSLTYLQNNGAAFSILQDQQWFFVVITVLVIGYAIYYLATHPHLNIWKQLALLLIISGGIGNFIDRLRLAYVIDMVHLDFVDFAIFNVADSYLTVGVILLVICLWKEEDYGN.

3 consecutive transmembrane segments (helical) span residues 5–25 (LFVL…FWIV), 61–81 (WFFV…LATH), and 84–104 (LNIW…GNFI). Residues aspartate 114 and aspartate 130 contribute to the active site. Residues 125–145 (IFNVADSYLTVGVILLVICLW) traverse the membrane as a helical segment.

This sequence belongs to the peptidase A8 family.

Its subcellular location is the cell membrane. The catalysed reaction is Release of signal peptides from bacterial membrane prolipoproteins. Hydrolyzes -Xaa-Yaa-Zaa-|-(S,diacylglyceryl)Cys-, in which Xaa is hydrophobic (preferably Leu), and Yaa (Ala or Ser) and Zaa (Gly or Ala) have small, neutral side chains.. The protein operates within protein modification; lipoprotein biosynthesis (signal peptide cleavage). Its function is as follows. This protein specifically catalyzes the removal of signal peptides from prolipoproteins. This Streptococcus pyogenes serotype M3 (strain ATCC BAA-595 / MGAS315) protein is Lipoprotein signal peptidase.